The following is a 666-amino-acid chain: Envelope glycoprotein (666 aa).

Positions 1 to 33 are cleaved as a signal peptide; that stretch reads MDRPALPKSIKDKTNPWGPIILGILIMLGGALG. The receptor-binding domain (RBD) stretch occupies residues 31–264; that stretch reads ALGKGSPHKV…KISDLGPRVP (234 aa). Residues 34–607 are Extracellular-facing; that stretch reads KGSPHKVFNL…FNRSPWLTTL (574 aa). Asn-42 is a glycosylation site (N-linked (GlcNAc...) asparagine; by host). Intrachain disulfides connect Cys-76–Cys-127, Cys-102–Cys-116, Cys-103–Cys-112, Cys-150–Cys-170, and Cys-162–Cys-175. Position 115 (Asp-115) interacts with Zn(2+). Asn-197 carries an N-linked (GlcNAc...) asparagine; by host glycan. Residues Cys-207 and Cys-213 are joined by a disulfide bond. The tract at residues 265–310 is disordered; it reads IGPNPVLSEQRPPSQPEPARLPPSSNLTQGGTPSAPTGPPQEGTGD. Positions 287–299 are enriched in polar residues; it reads PSSNLTQGGTPSA. N-linked (GlcNAc...) asparagine; by host glycosylation is found at Asn-290 and Asn-324. Intrachain disulfides connect Cys-334–Cys-337, Cys-334–Cys-560, Cys-364–Cys-417, Cys-424–Cys-437, and Cys-552–Cys-560. A CXXC motif is present at residues 334-337; that stretch reads CWLC. 2 N-linked (GlcNAc...) asparagine; by host glycosylation sites follow: Asn-356 and Asn-363. A disordered region spans residues 378–399; it reads TGKPLPRKGSQDPPGPVQYHSG. Asn-431 carries N-linked (GlcNAc...) asparagine; by host glycosylation. The segment at 469–489 is fusion peptide; sequence VSLTLALLLGGLTMGGIAAGV. Residues 500-534 adopt a coiled-coil conformation; it reads QQFEQLHAAIQADLKEVESSITNLEKSLTSLSEVV. The immunosuppression stretch occupies residues 535–551; that stretch reads LQNRRGLDLLFLEKGGL. A CX6CC motif is present at residues 552–560; it reads CAALKEECC. The helical transmembrane segment at 608–628 threads the bilayer; it reads ISTIMGPLIILLLILMFGPCI. Cys-627 carries S-palmitoyl cysteine; by host lipidation. The Cytoplasmic segment spans residues 629–666; the sequence is LNRLVQFVKDRISVVQALVLTQQYHQLKPLEHGRAIVK. The short motif at 652–655 is the YXXL motif; contains endocytosis signal element; the sequence is YHQL.

As to quaternary structure, the mature envelope protein (Env) consists of a trimer of SU-TM heterodimers attached by a labile interchain disulfide bond. Post-translationally, specific enzymatic cleavages in vivo yield mature proteins. Envelope glycoproteins are synthesized as an inactive precursor that is N-glycosylated and processed likely by host cell furin or by a furin-like protease in the Golgi to yield the mature SU and TM proteins. The cleavage site between SU and TM requires the minimal sequence [KR]-X-[KR]-R. The R-peptide is released from the C-terminus of the cytoplasmic tail of the TM protein upon particle formation as a result of proteolytic cleavage by the viral protease. Cleavage of this peptide is required for TM to become fusogenic. The CXXC motif is highly conserved across a broad range of retroviral envelope proteins. It is thought to participate in the formation of a labile disulfide bond possibly with the CX6CC motif present in the transmembrane protein. Isomerization of the intersubunit disulfide bond to an SU intrachain disulfide bond is thought to occur upon receptor recognition in order to allow membrane fusion. In terms of processing, the transmembrane protein is palmitoylated. Post-translationally, the R-peptide is palmitoylated.

Its subcellular location is the virion membrane. The protein resides in the host cell membrane. Functionally, the surface protein (SU) attaches the virus to the host cell by binding to its receptor. This interaction triggers the refolding of the transmembrane protein (TM) and is thought to activate its fusogenic potential by unmasking its fusion peptide. Fusion occurs at the host cell plasma membrane. Its function is as follows. The transmembrane protein (TM) acts as a class I viral fusion protein. Under the current model, the protein has at least 3 conformational states: pre-fusion native state, pre-hairpin intermediate state, and post-fusion hairpin state. During viral and target cell membrane fusion, the coiled coil regions (heptad repeats) assume a trimer-of-hairpins structure, positioning the fusion peptide in close proximity to the C-terminal region of the ectodomain. The formation of this structure appears to drive apposition and subsequent fusion of viral and target cell membranes. Membranes fusion leads to delivery of the nucleocapsid into the cytoplasm. The polypeptide is Envelope glycoprotein (env) (Hortulanus murine leukemia virus (HoMuLV)).